A 519-amino-acid chain; its full sequence is MGAPGRVLLWLQLCALTRAAYKLWVPNTYFDAADNWSQNQTPCAGAAVKFPADKMVSVLVREGHSISDMEELQDRKRENIHSFIHCSFIDRASPPASPFRCPAARTGALLPVQSLQCTCILAHRPLLPLDGEFVLASGAGFSAQNTGSHLDCSAGASALFLDPDRFLWHDPRLWSAGDAGRSLFSVDAERVPCRHDDAVFPSDASFRVGLGPGTVRVRSVRALGQTFTRDEDLAAFLASRAGRLRFHGSGALSVDPEACADPSGCVCGNAEVQPWICAALLQPLGGRCPQAACQDALRPEGQCCDLCGAIVSLTHGPAFDLERYRARLLHAFLALPQYQGLRMAMSKVPRQPHLHEASGAKADTEIQVVLAETGPETGSAGRLARALLADIAEHGEALGVLSATARESGPPVGGSSAAGLNAPGARSDLMGGLVAALLLLLLVLLVAALLLRRAGRLRWSRRHEAASEPAGTPLGFRNPVFYTADSVDPPPAPQPDVRSSSRSYFINPLYGEAEAEAEA.

Residues 1–19 (MGAPGRVLLWLQLCALTRA) form the signal peptide. Topologically, residues 20-430 (AYKLWVPNTY…NAPGARSDLM (411 aa)) are extracellular. 2 N-linked (GlcNAc...) asparagine glycosylation sites follow: asparagine 35 and asparagine 39. 6 cysteine pairs are disulfide-bonded: cysteine 43–cysteine 152, cysteine 193–cysteine 267, cysteine 259–cysteine 265, cysteine 277–cysteine 303, cysteine 288–cysteine 304, and cysteine 293–cysteine 307. Residues 67 to 143 (SDMEELQDRK…VLASGAGFSA (77 aa)) form an interaction with CUBN region. Residues 256 to 308 (PEACADPSGCVCGNAEVQPWICAALLQPLGGRCPQAACQDALRPEGQCCDLCG) enclose the VWFC domain. A helical transmembrane segment spans residues 431–451 (GGLVAALLLLLLVLLVAALLL). The Cytoplasmic portion of the chain corresponds to 452-519 (RRAGRLRWSR…YGEAEAEAEA (68 aa)).

As to quaternary structure, interacts (via extracellular region) with CUBN/cubilin, giving rise to a huge complex containing one AMN chain and three CUBN chains. In terms of processing, N-glycosylated. A soluble form arises by proteolytic removal of the membrane anchor. As to expression, detected in kidney cortex (at protein level).

It is found in the apical cell membrane. The protein localises to the cell membrane. Its subcellular location is the endosome membrane. The protein resides in the membrane. It localises to the coated pit. Membrane-bound component of the endocytic receptor formed by AMN and CUBN. Required for normal CUBN glycosylation and trafficking to the cell surface. The complex formed by AMN and CUBN is required for efficient absorption of vitamin B12. Required for normal CUBN-mediated protein transport in the kidney. The sequence is that of Protein amnionless (AMN) from Sus scrofa (Pig).